The primary structure comprises 272 residues: Alcohol dehydrogenase-related 31 kDa protein (272 aa).

NAD(+) is bound at residue 11–34 (YVADCGGIALETSKVLMTKNIAKL). A substrate-binding site is contributed by serine 139. The active-site Proton acceptor is the tyrosine 152.

This sequence belongs to the short-chain dehydrogenases/reductases (SDR) family.

This is Alcohol dehydrogenase-related 31 kDa protein (Adhr) from Drosophila mauritiana (Fruit fly).